The chain runs to 368 residues: 3-dehydroquinate synthase (368 aa).

NAD(+) is bound by residues 71-76 (DGESFK), 105-109 (GVIGD), 129-130 (TT), Lys142, Lys151, and 169-172 (TLRT). Zn(2+)-binding residues include Glu184, His247, and His264.

The protein belongs to the sugar phosphate cyclases superfamily. Dehydroquinate synthase family. The cofactor is Co(2+). Zn(2+) is required as a cofactor. It depends on NAD(+) as a cofactor.

The protein localises to the cytoplasm. It carries out the reaction 7-phospho-2-dehydro-3-deoxy-D-arabino-heptonate = 3-dehydroquinate + phosphate. The protein operates within metabolic intermediate biosynthesis; chorismate biosynthesis; chorismate from D-erythrose 4-phosphate and phosphoenolpyruvate: step 2/7. Catalyzes the conversion of 3-deoxy-D-arabino-heptulosonate 7-phosphate (DAHP) to dehydroquinate (DHQ). The chain is 3-dehydroquinate synthase from Ralstonia pickettii (strain 12J).